The primary structure comprises 250 residues: Type III pantothenate kinase (250 aa).

6 to 13 lines the ATP pocket; the sequence is DVGNTNTV. 103 to 106 is a binding site for substrate; it reads GADR. Catalysis depends on aspartate 105, which acts as the Proton acceptor. Aspartate 125 lines the K(+) pocket. Threonine 128 serves as a coordination point for ATP. Threonine 180 provides a ligand contact to substrate.

The protein belongs to the type III pantothenate kinase family. In terms of assembly, homodimer. The cofactor is NH4(+). It depends on K(+) as a cofactor.

It localises to the cytoplasm. The enzyme catalyses (R)-pantothenate + ATP = (R)-4'-phosphopantothenate + ADP + H(+). It functions in the pathway cofactor biosynthesis; coenzyme A biosynthesis; CoA from (R)-pantothenate: step 1/5. Functionally, catalyzes the phosphorylation of pantothenate (Pan), the first step in CoA biosynthesis. The sequence is that of Type III pantothenate kinase from Frankia alni (strain DSM 45986 / CECT 9034 / ACN14a).